A 161-amino-acid chain; its full sequence is uncharacterized protein (161 aa).

The segment at residues 1-23 (MKKFAFLTALFAACYLPNAYAHA) is a signal peptide (or 21). A helical transmembrane segment spans residues 129–149 (IYLHDILGGIGYIVGIAGLIA).

It is found in the membrane. This is an uncharacterized protein from Haemophilus influenzae (strain ATCC 51907 / DSM 11121 / KW20 / Rd).